Reading from the N-terminus, the 529-residue chain is Serine/threonine-protein kinase RIO2 (529 aa).

One can recognise a Protein kinase domain in the interval 97–273 (VGNQIGIGKE…RDVTCVRTFF (177 aa)). Lys-123 is a binding site for ATP. Asp-228 acts as the Proton acceptor in catalysis. 2 disordered regions span residues 331–366 (RNRQ…KDHE) and 411–452 (EGYK…GHVA). Residues 337–346 (DLGEDEDDSD) are compositionally biased toward acidic residues. Positions 411–428 (EGYKDIELPPEDFKRPAD) are enriched in basic and acidic residues. Residues 429–447 (SENDDENDEDEEEGEEEDA) show a composition bias toward acidic residues.

It belongs to the protein kinase superfamily. RIO-type Ser/Thr kinase family. The cofactor is Mg(2+). In terms of tissue distribution, expressed in pharynx (metacorpus and posterior bulbus). Expression is restricted to adult stage.

The enzyme catalyses L-seryl-[protein] + ATP = O-phospho-L-seryl-[protein] + ADP + H(+). It carries out the reaction L-threonyl-[protein] + ATP = O-phospho-L-threonyl-[protein] + ADP + H(+). Functionally, required for larval development. The protein is Serine/threonine-protein kinase RIO2 of Caenorhabditis elegans.